The sequence spans 450 residues: Zinc finger protein 446 (450 aa).

The SCAN box domain maps to 26–108; the sequence is RLRFRGFCYQ…ALVEGLQHDP (83 aa). Residue lysine 130 forms a Glycyl lysine isopeptide (Lys-Gly) (interchain with G-Cter in SUMO2) linkage. 2 disordered regions span residues 130–155 and 168–205; these read KTEE…QDTR and EEPN…SFHP. A Phosphoserine modification is found at serine 137. The KRAB domain occupies 208 to 254; that stretch reads IQEEWGLLDRSQKELYWDAMLEKYGTVVSLGLPPHQPEAQAQSELGM. Phosphoserine is present on serine 218. 2 disordered regions span residues 263-331 and 354-389; these read RSLR…PRKP and HTSG…RRSL. A compositionally biased stretch (pro residues) spans 275-286; sequence PGCPEAQPPQGP. The segment covering 287 to 306 has biased composition (low complexity); it reads GPAAWEGLSGAATPAPTVRP. Threonine 308 carries the phosphothreonine modification. Lysine 330 participates in a covalent cross-link: Glycyl lysine isopeptide (Lys-Gly) (interchain with G-Cter in SUMO2). 3 consecutive C2H2-type zinc fingers follow at residues 332–359, 395–422, and 423–450; these read YTCE…SGPG, YPCE…GQRR, and HFCS…PEVP.

The protein belongs to the krueppel C2H2-type zinc-finger protein family.

Its subcellular location is the nucleus. In terms of biological role, may be involved in transcriptional regulation. The polypeptide is Zinc finger protein 446 (ZNF446) (Homo sapiens (Human)).